A 91-amino-acid chain; its full sequence is UPF0250 protein PFLU_5418 (91 aa).

The protein belongs to the UPF0250 family.

This Pseudomonas fluorescens (strain SBW25) protein is UPF0250 protein PFLU_5418.